The primary structure comprises 458 residues: 5-hydroxytryptamine receptor 2C (458 aa).

Residues 1-32 (MVNLRKAVHSFLVHLIGLLVWQCDISVSPVAA) form the signal peptide. Residues 33 to 55 (LVTDIFNTSDGGRFKFPDGVQNW) are Extracellular-facing. Residues 56-80 (PALSIVIIIILTIGGNILVIMAVSL) form a helical membrane-spanning segment. Residues 81 to 86 (EKKLHN) are Cytoplasmic-facing. Residues 87-111 (ATNYFLMSLAIADMLVGLLVMPLSL) traverse the membrane as a helical segment. The Extracellular portion of the chain corresponds to 112–128 (LAILYDYVWPLPRYLCP). C127 and C207 are oxidised to a cystine. Residues 129-151 (VWISLDVLFSTASIMHLCAISLD) form a helical membrane-spanning segment. T139 lines the ergotamine pocket. Residues 151-153 (DRY) carry the DRY motif; important for ligand-induced conformation changes motif. Topologically, residues 152–167 (RYVAIRNPVEHSRFNS) are cytoplasmic. Residues 168 to 189 (RTKAIMKIAIVWAISIGVSVPI) traverse the membrane as a helical segment. The Extracellular segment spans residues 190 to 213 (PVIGLRDEEKVFVNNTTCVLNDPN). Residues N203 and N204 are each glycosylated (N-linked (GlcNAc...) asparagine). Ergotamine is bound at residue L209. A helical membrane pass occupies residues 214–236 (FVLIGSFVAFFIPLTIMVITYCL). Residues 237–311 (TIHVLRRQAL…AINNERKASK (75 aa)) lie on the Cytoplasmic side of the membrane. Positions 272–301 (TEEENSANPNQDSNPRRRKKKERRPRGTMQ) are disordered. Over residues 287 to 297 (RRRKKKERRPR) the composition is skewed to basic residues. Residues 312–336 (VLGIVFFVFLVMWCPFFITNILSVL) form a helical membrane-spanning segment. C337 and C341 are joined by a disulfide. Over 337–347 (CGKACNQKLME) the chain is Extracellular. A helical transmembrane segment spans residues 348-370 (KLLNVFVWIGYVCSGINPLVYTL). Positions 364 to 368 (NPLVY) match the NPxxY motif; important for ligand-induced conformation changes and signaling motif. Residues 371 to 458 (FNKIYRRAFS…SVVSERISSV (88 aa)) are Cytoplasmic-facing. The short motif at 456–458 (SSV) is the PDZ-binding element.

Belongs to the G-protein coupled receptor 1 family. In terms of assembly, interacts with MPDZ. Interacts with ARRB2. Interacts with MPP3; this interaction stabilizes the receptor at the plasma membrane and prevents the desensitization of the HTR2C receptor-mediated calcium response.

The protein localises to the cell membrane. Its function is as follows. G-protein coupled receptor for 5-hydroxytryptamine (serotonin). Also functions as a receptor for various drugs and psychoactive substances, including ergot alkaloid derivatives, 1-2,5,-dimethoxy-4-iodophenyl-2-aminopropane (DOI) and lysergic acid diethylamide (LSD). Ligand binding causes a conformation change that triggers signaling via guanine nucleotide-binding proteins (G proteins) and modulates the activity of downstream effectors. HTR2C is coupled to G(q)/G(11) G alpha proteins and activates phospholipase C-beta, releasing diacylglycerol (DAG) and inositol 1,4,5-trisphosphate (IP3) second messengers that modulate the activity of phosphatidylinositol 3-kinase and promote the release of Ca(2+) ions from intracellular stores, respectively. Beta-arrestin family members inhibit signaling via G proteins and mediate activation of alternative signaling pathways. Regulates neuronal activity via the activation of short transient receptor potential calcium channels in the brain, and thereby modulates the activation of pro-opiomelanocortin neurons and the release of CRH that then regulates the release of corticosterone. Plays a role in the regulation of appetite and eating behavior, responses to anxiogenic stimuli and stress. Plays a role in insulin sensitivity and glucose homeostasis. In Canis lupus familiaris (Dog), this protein is 5-hydroxytryptamine receptor 2C.